An 86-amino-acid polypeptide reads, in one-letter code: Protein Tat (86 aa).

The interval 1–24 is interaction with human CREBBP; that stretch reads MDPVDPNQEPWNHPGSQPRTACNN. Residues 1–48 form a transactivation region; the sequence is MDPVDPNQEPWNHPGSQPRTACNNCYCKKCCYHCQLCFLKKGLGIYYG. 3 residues coordinate Zn(2+): C22, C25, and C27. The tract at residues 22-37 is cysteine-rich; sequence CNNCYCKKCCYHCQLC. K28 carries the N6-acetyllysine; by host PCAF modification. Residues C30, H33, C34, and C37 each contribute to the Zn(2+) site. The interval 38–48 is core; that stretch reads FLKKGLGIYYG. Residues 48 to 58 show a composition bias toward basic residues; the sequence is GRKKRRQRRGT. Residues 48 to 86 form a disordered region; sequence GRKKRRQRRGTPKSLQDHQTLIPKQPLSRTSGDPTGPEK. Residues 49-57 carry the Nuclear localization signal, RNA-binding (TAR), and protein transduction motif; that stretch reads RKKRRQRRG. Residues 49–86 form an interaction with the host capping enzyme RNGTT region; the sequence is RKKRRQRRGTPKSLQDHQTLIPKQPLSRTSGDPTGPEK. N6-acetyllysine; by host EP300 and GCN5L2 occurs at positions 50 and 51. 2 positions are modified to asymmetric dimethylarginine; by host PRMT6: R52 and R53. K71 is covalently cross-linked (Glycyl lysine isopeptide (Lys-Gly) (interchain with G-Cter in ubiquitin)).

Belongs to the lentiviruses Tat family. In terms of assembly, interacts with host CCNT1. Associates with the P-TEFb complex composed at least of Tat, P-TEFb (CDK9 and CCNT1), TAR RNA, RNA Pol II. Recruits the HATs CREBBP, TAF1/TFIID, EP300, PCAF and GCN5L2. Interacts with host KAT5/Tip60; this interaction targets the latter to degradation. Interacts with the host deacetylase SIRT1. Interacts with host capping enzyme RNGTT; this interaction stimulates RNGTT. Binds to host KDR, and to the host integrins ITGAV/ITGB3 and ITGA5/ITGB1. Interacts with host KPNB1/importin beta-1 without previous binding to KPNA1/importin alpha-1. Interacts with EIF2AK2. Interacts with host nucleosome assembly protein NAP1L1; this interaction may be required for the transport of Tat within the nucleus, since the two proteins interact at the nuclear rim. Interacts with host C1QBP/SF2P32; this interaction involves lysine-acetylated Tat. Interacts with the host chemokine receptors CCR2, CCR3 and CXCR4. Interacts with host DPP4/CD26; this interaction may trigger an anti-proliferative effect. Interacts with host LDLR. Interacts with the host extracellular matrix metalloproteinase MMP1. Interacts with host PRMT6; this interaction mediates Tat's methylation. Interacts with, and is ubiquitinated by MDM2/Hdm2. Interacts with host PSMC3 and HTATIP2. Interacts with STAB1; this interaction may overcome SATB1-mediated repression of IL2 and IL2RA (interleukin) in T cells by binding to the same domain than HDAC1. Interacts (when acetylated) with human CDK13, thereby increasing HIV-1 mRNA splicing and promoting the production of the doubly spliced HIV-1 protein Nef. Interacts with host TBP; this interaction modulates the activity of transcriptional pre-initiation complex. Interacts with host RELA. Interacts with host PLSCR1; this interaction negatively regulates Tat transactivation activity by altering its subcellular distribution. Post-translationally, asymmetrical arginine methylation by host PRMT6 seems to diminish the transactivation capacity of Tat and affects the interaction with host CCNT1. In terms of processing, acetylation by EP300, CREBBP, GCN5L2/GCN5 and PCAF regulates the transactivation activity of Tat. EP300-mediated acetylation of Lys-50 promotes dissociation of Tat from the TAR RNA through the competitive binding to PCAF's bromodomain. In addition, the non-acetylated Tat's N-terminus can also interact with PCAF. PCAF-mediated acetylation of Lys-28 enhances Tat's binding to CCNT1. Lys-50 is deacetylated by SIRT1. Polyubiquitination by host MDM2 does not target Tat to degradation, but activates its transactivation function and fosters interaction with CCNT1 and TAR RNA. Post-translationally, phosphorylated by EIF2AK2 on serine and threonine residues adjacent to the basic region important for TAR RNA binding and function. Phosphorylation of Tat by EIF2AK2 is dependent on the prior activation of EIF2AK2 by dsRNA.

The protein localises to the host nucleus. It localises to the host nucleolus. Its subcellular location is the host cytoplasm. The protein resides in the secreted. Functionally, transcriptional activator that increases RNA Pol II processivity, thereby increasing the level of full-length viral transcripts. Recognizes a hairpin structure at the 5'-LTR of the nascent viral mRNAs referred to as the transactivation responsive RNA element (TAR) and recruits the cyclin T1-CDK9 complex (P-TEFb complex) that will in turn hyperphosphorylate the RNA polymerase II to allow efficient elongation. The CDK9 component of P-TEFb and other Tat-activated kinases hyperphosphorylate the C-terminus of RNA Pol II that becomes stabilized and much more processive. Other factors such as HTATSF1/Tat-SF1, SUPT5H/SPT5, and HTATIP2 are also important for Tat's function. Besides its effect on RNA Pol II processivity, Tat induces chromatin remodeling of proviral genes by recruiting the histone acetyltransferases (HATs) CREBBP, EP300 and PCAF to the chromatin. This also contributes to the increase in proviral transcription rate, especially when the provirus integrates in transcriptionally silent region of the host genome. To ensure maximal activation of the LTR, Tat mediates nuclear translocation of NF-kappa-B by interacting with host RELA. Through its interaction with host TBP, Tat may also modulate transcription initiation. Tat can reactivate a latently infected cell by penetrating in it and transactivating its LTR promoter. In the cytoplasm, Tat is thought to act as a translational activator of HIV-1 mRNAs. Its function is as follows. Extracellular circulating Tat can be endocytosed by surrounding uninfected cells via the binding to several surface receptors such as CD26, CXCR4, heparan sulfate proteoglycans (HSPG) or LDLR. Neurons are rarely infected, but they internalize Tat via their LDLR. Through its interaction with nuclear HATs, Tat is potentially able to control the acetylation-dependent cellular gene expression. Modulates the expression of many cellular genes involved in cell survival, proliferation or in coding for cytokines or cytokine receptors. Tat plays a role in T-cell and neurons apoptosis. Tat induced neurotoxicity and apoptosis probably contribute to neuroAIDS. Circulating Tat also acts as a chemokine-like and/or growth factor-like molecule that binds to specific receptors on the surface of the cells, affecting many cellular pathways. In the vascular system, Tat binds to ITGAV/ITGB3 and ITGA5/ITGB1 integrins dimers at the surface of endothelial cells and competes with bFGF for heparin-binding sites, leading to an excess of soluble bFGF. This Human immunodeficiency virus type 1 group M subtype H (isolate VI991) (HIV-1) protein is Protein Tat.